Reading from the N-terminus, the 344-residue chain is Heat-inducible transcription repressor HrcA (344 aa).

The protein belongs to the HrcA family.

In terms of biological role, negative regulator of class I heat shock genes (grpE-dnaK-dnaJ and groELS operons). Prevents heat-shock induction of these operons. The protein is Heat-inducible transcription repressor HrcA of Streptococcus agalactiae serotype III (strain NEM316).